Reading from the N-terminus, the 104-residue chain is Large ribosomal subunit protein uL24 (104 aa).

Belongs to the universal ribosomal protein uL24 family. As to quaternary structure, part of the 50S ribosomal subunit.

Its function is as follows. One of two assembly initiator proteins, it binds directly to the 5'-end of the 23S rRNA, where it nucleates assembly of the 50S subunit. One of the proteins that surrounds the polypeptide exit tunnel on the outside of the subunit. In Enterobacter sp. (strain 638), this protein is Large ribosomal subunit protein uL24.